The sequence spans 79 residues: D-alanyl carrier protein (79 aa).

Positions 1 to 77 constitute a Carrier domain; the sequence is MSIEETVIEL…KIVQGVEELQ (77 aa). Ser35 carries the post-translational modification O-(pantetheine 4'-phosphoryl)serine.

It belongs to the DltC family. 4'-phosphopantetheine is transferred from CoA to a specific serine of apo-DCP.

Its subcellular location is the cytoplasm. It participates in cell wall biogenesis; lipoteichoic acid biosynthesis. In terms of biological role, carrier protein involved in the D-alanylation of lipoteichoic acid (LTA). The loading of thioester-linked D-alanine onto DltC is catalyzed by D-alanine--D-alanyl carrier protein ligase DltA. The DltC-carried D-alanyl group is further transferred to cell membrane phosphatidylglycerol (PG) by forming an ester bond, probably catalyzed by DltD. D-alanylation of LTA plays an important role in modulating the properties of the cell wall in Gram-positive bacteria, influencing the net charge of the cell wall. The protein is D-alanyl carrier protein of Streptococcus pyogenes serotype M1.